The primary structure comprises 311 residues: Protease HtpX homolog 1 (311 aa).

A run of 2 helical transmembrane segments spans residues 12 to 32 (VISLGLTIISEGIVLIGIASL) and 35 to 55 (ISLFFIFPALVIFWLFQWIIS). Zn(2+) is bound at residue histidine 137. Residue glutamate 138 is part of the active site. Histidine 141 contacts Zn(2+). The next 2 helical transmembrane spans lie at 159–179 (VLGYISTLLMNFGYLALFLAA) and 184–204 (LLFAIAALAIGFVIFVVTFIL). Residue glutamate 216 participates in Zn(2+) binding.

The protein belongs to the peptidase M48B family. It depends on Zn(2+) as a cofactor.

Its subcellular location is the cell membrane. The protein is Protease HtpX homolog 1 of Saccharolobus solfataricus (strain ATCC 35092 / DSM 1617 / JCM 11322 / P2) (Sulfolobus solfataricus).